We begin with the raw amino-acid sequence, 406 residues long: Transposase for insertion sequence element IS1001 (406 aa).

Belongs to the transposase 12 family.

Functionally, involved in the transposition of the insertion sequence. The protein is Transposase for insertion sequence element IS1001 (tnpA) of Bordetella parapertussis.